The following is a 505-amino-acid chain: Catalase (505 aa).

Residues 1-25 are disordered; the sequence is MSRQDKKLTGVFGHPVSDRENSMTA. Active-site residues include H56 and N129. Residue Y339 coordinates heme.

This sequence belongs to the catalase family. As to quaternary structure, homodimer. It depends on heme as a cofactor.

It catalyses the reaction 2 H2O2 = O2 + 2 H2O. Its function is as follows. Decomposes hydrogen peroxide into water and oxygen; serves to protect cells from the toxic effects of hydrogen peroxide. The polypeptide is Catalase (katA) (Staphylococcus aureus (strain MRSA252)).